We begin with the raw amino-acid sequence, 186 residues long: Sec-independent protein translocase protein TatB (186 aa).

Residues 1-21 (MFDIGFSELILLMVLGLVVLG) form a helical membrane-spanning segment. The interval 120–186 (NAEKSQNAIS…SKSQSSKTKS (67 aa)) is disordered. Polar residues predominate over residues 177-186 (SKSQSSKTKS).

This sequence belongs to the TatB family. As to quaternary structure, the Tat system comprises two distinct complexes: a TatABC complex, containing multiple copies of TatA, TatB and TatC subunits, and a separate TatA complex, containing only TatA subunits. Substrates initially bind to the TatABC complex, which probably triggers association of the separate TatA complex to form the active translocon.

It localises to the cell inner membrane. Its function is as follows. Part of the twin-arginine translocation (Tat) system that transports large folded proteins containing a characteristic twin-arginine motif in their signal peptide across membranes. Together with TatC, TatB is part of a receptor directly interacting with Tat signal peptides. TatB may form an oligomeric binding site that transiently accommodates folded Tat precursor proteins before their translocation. The polypeptide is Sec-independent protein translocase protein TatB (Haemophilus influenzae (strain ATCC 51907 / DSM 11121 / KW20 / Rd)).